Reading from the N-terminus, the 63-residue chain is UPF0337 protein RA1131 (63 aa).

The disordered stretch occupies residues 1-63 (MGSAKDKVAG…DAVKGAVDKT (63 aa)). Residues 34–49 (AKGAAQEAKGGAQQAK) show a composition bias toward low complexity. Residues 51–63 (KLKDAVKGAVDKT) are compositionally biased toward basic and acidic residues.

The protein belongs to the UPF0337 (CsbD) family.

This Rhizobium meliloti (strain 1021) (Ensifer meliloti) protein is UPF0337 protein RA1131.